We begin with the raw amino-acid sequence, 293 residues long: Ribokinase (293 aa).

Substrate is bound by residues 11-13 (SMD), 39-43 (GKGAN), and glutamate 139. Residues asparagine 183 and 210 to 215 (TEGKQG) each bind ATP. Residues aspartate 236 and threonine 238 each coordinate K(+). ATP is bound by residues 241-242 (GD) and asparagine 266. Aspartate 242 is a substrate binding site. The Proton acceptor role is filled by aspartate 242. The K(+) site is built by serine 272, serine 275, and glycine 277.

Belongs to the carbohydrate kinase PfkB family. Ribokinase subfamily. As to quaternary structure, homodimer. It depends on Mg(2+) as a cofactor.

It localises to the cytoplasm. The catalysed reaction is D-ribose + ATP = D-ribose 5-phosphate + ADP + H(+). Its pathway is carbohydrate metabolism; D-ribose degradation; D-ribose 5-phosphate from beta-D-ribopyranose: step 2/2. Activated by a monovalent cation that binds near, but not in, the active site. The most likely occupant of the site in vivo is potassium. Ion binding induces a conformational change that may alter substrate affinity. Its function is as follows. Catalyzes the phosphorylation of ribose at O-5 in a reaction requiring ATP and magnesium. The resulting D-ribose-5-phosphate can then be used either for sythesis of nucleotides, histidine, and tryptophan, or as a component of the pentose phosphate pathway. The sequence is that of Ribokinase from Bacillus subtilis (strain 168).